The primary structure comprises 266 residues: Stomatin homolog PH1511 (266 aa).

The chain crosses the membrane as a helical span at residues Phe7 to Ile27. Coiled-coil stretches lie at residues Gly125–Asp152 and Arg178–His213.

This sequence belongs to the band 7/mec-2 family. Homotrimer. Interacts with PH1510 and is cleaved by PH1510.

The protein localises to the membrane. This chain is Stomatin homolog PH1511, found in Pyrococcus horikoshii (strain ATCC 700860 / DSM 12428 / JCM 9974 / NBRC 100139 / OT-3).